The chain runs to 326 residues: Protease inhibitor (326 aa).

A signal peptide spans 1–24 (MKTIRTGMMTLAALAVLGTNVVSA). 2 consecutive repeat copies span residues 177-208 (IILHVDKETKITTADGKELKPEDLQLGMEVEA) and 272-304 (VALIVGKDTKIVSAKDNKELAPEDLKAEMKVFA). The 2 X 32 AA approximate repeats stretch occupies residues 177 to 304 (IILHVDKETK…DLKAEMKVFA (128 aa)).

Proteolytically cleaved to yield at least three forms (BBRPI-A, -B, and -C).

It localises to the secreted. Its function is as follows. Shows inhibitory activity towards serine proteases, such as trypsin, chymotrypsin and subtilisin. May form a trypsin-inhibitor complex in a molar ratio of 1:1. In Brevibacillus choshinensis, this protein is Protease inhibitor.